Here is a 371-residue protein sequence, read N- to C-terminus: MSSGNIWKQLLEENSEQLDQSTTETYVVCCENEDSLNQFLQQCWQIDEGEKVTNLEPLGFFTKVVSRDEENLRLNVYYAKSPLDAQTLQFLGVFLRQMETSQIRWIFLLDWLLDDKRLWLRQLRNSWAALEEAQVAPFPGGAVVVVLNPSHVTQLERNTMVWNSRRLDLVHQTLRAACLNTGSALVTLDPNTAREDVMHICALLAGLPTSRPVAMLSLQSLFIPHGADSIGKICTIAPEFPVATVFDNDFVSSTFEAAIAPELTPGPRVPSDHPWLTEPTNPPSEATAWHFDLQGRLATLYRHLGDSNKAISVTQHRFHKPRSEDYAYEFELPSKHPTIRDLIRSAAADSPNDVADSIDGLMDGIVQRNVH.

Belongs to the dynein light intermediate chain DYN3 family. As to quaternary structure, the cytoplasmic dynein is composed of at least two heavy chains and a number of intermediate and light chains.

It is found in the cytoplasm. Its subcellular location is the cytoskeleton. Its function is as follows. Component of the cytoplasmic dynein which acts as a motor for the intracellular retrograde motility of vesicles and organelles along microtubules. May play an important role in the proper orientation of the mitotic spindle into the budding daughter cell yeast. Probably required for normal progression of the cell cycle. The protein is Cytoplasmic dynein intermediate light chain DYN3 (DYN3) of Eremothecium gossypii (strain ATCC 10895 / CBS 109.51 / FGSC 9923 / NRRL Y-1056) (Yeast).